Consider the following 400-residue polypeptide: Zinc finger protein 514 (400 aa).

The KRAB domain occupies 1-72; sequence MTFEDVAVEF…EREISTGAHS (72 aa). 7 consecutive C2H2-type zinc fingers follow at residues 204 to 226, 232 to 254, 260 to 282, 288 to 310, 316 to 338, 344 to 366, and 372 to 394; these read CKCN…QRCH, YECS…QRTH, YECS…YRFH, YKCN…QRTH, YECR…YRFH, YKCN…YRFH, and YKCN…QRSH.

This sequence belongs to the krueppel C2H2-type zinc-finger protein family.

It is found in the nucleus. In terms of biological role, may be involved in transcriptional regulation. In Homo sapiens (Human), this protein is Zinc finger protein 514 (ZNF514).